The chain runs to 434 residues: Transcription elongation factor B polypeptide 3 (434 aa).

The interval 142–161 is disordered; it reads KPEPVDVHEQQASSSSMSYQ. Over residues 151–160 the composition is skewed to polar residues; sequence QQASSSSMSY. Positions 221 to 230 are BC box; the sequence is TLVSLCQTVL. Positions 237–281 constitute an F-box domain; it reads IDHVGIVPFDLLKPVLDHASTDQLRHILDVNPMLVEDADEMFHEM. The interval 391 to 415 is disordered; sequence ITPRGGGVPSTSRSRSNNNNNMNNG.

Heterotrimer of an A, B and C subunit.

It is found in the nucleus. SIII, also known as elongin, is a general transcription elongation factor that increases the RNA polymerase II transcription elongation past template-encoded arresting sites. Subunit A is transcriptionally active and its transcription activity is strongly enhanced by binding to the dimeric complex of the SIII regulatory subunits B and C (elongin BC complex). The chain is Transcription elongation factor B polypeptide 3 from Caenorhabditis elegans.